A 518-amino-acid chain; its full sequence is MADKLNEYVALIKTEIKKYSKKIFNSEIGQVISVADGIAKVSGLENALLNELIQFENNIQGIVLNLEQNTVGIALFGDYSSLREGSTAKRTHSVMKTPVGDVMLGRIVNALGEAIDGRGDIKATEYDQIEKIAPGVMKRKSVNQPLETGILTIDALFPIGKGQRELIVGDRQTGKTAIAIDTIINQKDKDVYCVYVAIGQKNSSVAQIVHQLEVNDSMKYTTVVCATASDSDSMVYLSPFTGITIAEYWLKKGKDVLIVFDDLSKHAVAYRTLSLLLKRPPGREAFPGDVFYLHSRLLERACKLNDENGGGSITALPIIETQAGDISAYIPTNVISITDGQLFMVSSLFNAGQRPAIQIGLSVSRVGSAAQTKAIKQQTGSLKLELAQYSELDSFSQFGSDLDENTKKVLEHGKRVMEMIKQPNGKPYSQVHEALFLFAINKAFIKFIPVDEIAKFKQRITEEFNGSHPLFKELSNKKEFTEDLESKTKTAFKMLVKRFISTLTDYDITKFGSIEELN.

169 to 176 (GDRQTGKT) contacts ATP.

It belongs to the ATPase alpha/beta chains family. F-type ATPases have 2 components, CF(1) - the catalytic core - and CF(0) - the membrane proton channel. CF(1) has five subunits: alpha(3), beta(3), gamma(1), delta(1), epsilon(1). CF(0) has three main subunits: a(1), b(2) and c(9-12). The alpha and beta chains form an alternating ring which encloses part of the gamma chain. CF(1) is attached to CF(0) by a central stalk formed by the gamma and epsilon chains, while a peripheral stalk is formed by the delta and b chains.

The protein localises to the cell membrane. It catalyses the reaction ATP + H2O + 4 H(+)(in) = ADP + phosphate + 5 H(+)(out). Its function is as follows. Produces ATP from ADP in the presence of a proton gradient across the membrane. The alpha chain is a regulatory subunit. This Mycoplasma genitalium (strain ATCC 33530 / DSM 19775 / NCTC 10195 / G37) (Mycoplasmoides genitalium) protein is ATP synthase subunit alpha.